A 273-amino-acid chain; its full sequence is Transmembrane epididymal protein 1 (273 aa).

The next 6 membrane-spanning stretches (helical) occupy residues 34 to 54, 72 to 92, 96 to 116, 129 to 149, 158 to 178, and 195 to 215; these read IVTG…GMVL, LTMF…KNVL, CVGL…LLMV, VYSL…AELW, LMET…GFIL, and IMFV…FLLG.

Belongs to the TMEM45 family.

The protein resides in the membrane. This is Transmembrane epididymal protein 1 (TEDDM1) from Homo sapiens (Human).